The sequence spans 299 residues: Cysteine synthase B (299 aa).

Residue lysine 40 is modified to N6-(pyridoxal phosphate)lysine. Pyridoxal 5'-phosphate is bound by residues asparagine 70, 174-178, and serine 261; that span reads GTGGT.

It belongs to the cysteine synthase/cystathionine beta-synthase family. The cofactor is pyridoxal 5'-phosphate.

It carries out the reaction O-acetyl-L-serine + hydrogen sulfide = L-cysteine + acetate. It functions in the pathway amino-acid biosynthesis; L-cysteine biosynthesis; L-cysteine from L-serine: step 2/2. The polypeptide is Cysteine synthase B (cysM) (Campylobacter jejuni subsp. jejuni serotype O:2 (strain ATCC 700819 / NCTC 11168)).